Here is a 212-residue protein sequence, read N- to C-terminus: Deoxyribose-phosphate aldolase (212 aa).

D89 serves as the catalytic Proton donor/acceptor. The active-site Schiff-base intermediate with acetaldehyde is the K151. K180 serves as the catalytic Proton donor/acceptor.

The protein belongs to the DeoC/FbaB aldolase family. DeoC type 1 subfamily.

Its subcellular location is the cytoplasm. It catalyses the reaction 2-deoxy-D-ribose 5-phosphate = D-glyceraldehyde 3-phosphate + acetaldehyde. Its pathway is carbohydrate degradation; 2-deoxy-D-ribose 1-phosphate degradation; D-glyceraldehyde 3-phosphate and acetaldehyde from 2-deoxy-alpha-D-ribose 1-phosphate: step 2/2. Its function is as follows. Catalyzes a reversible aldol reaction between acetaldehyde and D-glyceraldehyde 3-phosphate to generate 2-deoxy-D-ribose 5-phosphate. This chain is Deoxyribose-phosphate aldolase, found in Clostridium botulinum (strain Okra / Type B1).